We begin with the raw amino-acid sequence, 231 residues long: 6-hydroxymethyl-7,8-dihydropterin pyrophosphokinase (231 aa).

It belongs to the archaeal 6-HMPDK family. Mg(2+) serves as cofactor.

The enzyme catalyses 6-hydroxymethyl-7,8-dihydropterin + ATP = (7,8-dihydropterin-6-yl)methyl diphosphate + AMP + H(+). Catalyzes the transfer of diphosphate from ATP to 6-hydroxymethyl-7,8-dihydropterin (6-HMD), leading to 6-hydroxymethyl-7,8-dihydropterin diphosphate (6-HMDP). To a lesser extent, can also use CTP, UTP, and GTP as the nucleotide triphosphate substrate. The protein is 6-hydroxymethyl-7,8-dihydropterin pyrophosphokinase of Pyrococcus furiosus (strain ATCC 43587 / DSM 3638 / JCM 8422 / Vc1).